A 902-amino-acid chain; its full sequence is Alanine--tRNA ligase (902 aa).

Zn(2+) contacts are provided by histidine 567, histidine 571, cysteine 671, and histidine 675.

It belongs to the class-II aminoacyl-tRNA synthetase family. Requires Zn(2+) as cofactor.

The protein resides in the cytoplasm. It catalyses the reaction tRNA(Ala) + L-alanine + ATP = L-alanyl-tRNA(Ala) + AMP + diphosphate. Catalyzes the attachment of alanine to tRNA(Ala) in a two-step reaction: alanine is first activated by ATP to form Ala-AMP and then transferred to the acceptor end of tRNA(Ala). Also edits incorrectly charged Ser-tRNA(Ala) and Gly-tRNA(Ala) via its editing domain. The polypeptide is Alanine--tRNA ligase (Mycoplasmoides gallisepticum (strain R(low / passage 15 / clone 2)) (Mycoplasma gallisepticum)).